A 108-amino-acid chain; its full sequence is ATP-dependent Clp protease adapter protein ClpS (108 aa).

The protein belongs to the ClpS family. Binds to the N-terminal domain of the chaperone ClpA.

Involved in the modulation of the specificity of the ClpAP-mediated ATP-dependent protein degradation. The protein is ATP-dependent Clp protease adapter protein ClpS of Cupriavidus necator (strain ATCC 17699 / DSM 428 / KCTC 22496 / NCIMB 10442 / H16 / Stanier 337) (Ralstonia eutropha).